We begin with the raw amino-acid sequence, 781 residues long: Death domain-containing protein 1 (781 aa).

ZU5 domains follow at residues 167–301 and 302–483; these read IMEK…VSCL and KKES…VLHL. The region spanning 679-764 is the Death domain; the sequence is DNLLHWLAEE…DLAEELKFKW (86 aa).

The protein is Death domain-containing protein 1 (DTHD1) of Homo sapiens (Human).